Reading from the N-terminus, the 235-residue chain is Calcium-activated potassium channel subunit beta-2 (235 aa).

The ball and chain stretch occupies residues 1–45 (MFIWTSGRTSSSYRHDEKRNIYQKIRDHDLLDKRKTVTALKAGED). Topologically, residues 1–46 (MFIWTSGRTSSSYRHDEKRNIYQKIRDHDLLDKRKTVTALKAGEDR) are cytoplasmic. The chain crosses the membrane as a helical span at residues 47–67 (AILLGLAMMVCSIMMYFLLGI). Residues 68 to 194 (TLLRSYMQSV…VILTKLYSSN (127 aa)) are Extracellular-facing. N-linked (GlcNAc...) asparagine glycosylation is found at Asn88, Asn96, and Asn119. The chain crosses the membrane as a helical span at residues 195–215 (VLFHSLFWPTCMMAGGVAIVA). Topologically, residues 216 to 235 (MVKLTQYLSLLCERIQRINR) are cytoplasmic.

This sequence belongs to the KCNMB (TC 8.A.14.1) family. KCNMB2 subfamily. Interacts with KCNMA1 tetramer. There are probably 4 molecules of KCMNB2 per KCNMA1 tetramer. N-glycosylated. Highly expressed in brain and heart. Also expressed in lung.

The protein resides in the membrane. Regulatory subunit of the calcium activated potassium KCNMA1 (maxiK) channel. Modulates the calcium sensitivity and gating kinetics of KCNMA1, thereby contributing to KCNMA1 channel diversity. Acts as a negative regulator that confers rapid and complete inactivation of KCNMA1 channel complex. The chain is Calcium-activated potassium channel subunit beta-2 (Kcnmb2) from Rattus norvegicus (Rat).